A 434-amino-acid chain; its full sequence is Trigger factor (434 aa).

In terms of domain architecture, PPIase FKBP-type spans 160–245; the sequence is GDKVKMNFVG…LTEVQAANLP (86 aa).

It belongs to the FKBP-type PPIase family. Tig subfamily.

It localises to the cytoplasm. It catalyses the reaction [protein]-peptidylproline (omega=180) = [protein]-peptidylproline (omega=0). Functionally, involved in protein export. Acts as a chaperone by maintaining the newly synthesized protein in an open conformation. Functions as a peptidyl-prolyl cis-trans isomerase. The protein is Trigger factor of Shewanella baltica (strain OS223).